A 438-amino-acid polypeptide reads, in one-letter code: 26S proteasome regulatory subunit 7 homolog (438 aa).

Residues 1 to 15 are compositionally biased toward basic and acidic residues; it reads MPPKEDWEKYQKPVD. Residues 1-31 form a disordered region; sequence MPPKEDWEKYQKPVDTEEENDKNPPPLDEGD. A Phosphoserine modification is found at Ser-90. An ATP-binding site is contributed by 220–227; that stretch reads GPPGTGKT.

The protein belongs to the AAA ATPase family.

The protein resides in the cytoplasm. It localises to the nucleus. Functionally, the 26S proteasome is involved in the ATP-dependent degradation of ubiquitinated proteins. The regulatory (or ATPase) complex confers ATP dependency and substrate specificity to the 26S complex. The sequence is that of 26S proteasome regulatory subunit 7 homolog (rpt1) from Schizosaccharomyces pombe (strain 972 / ATCC 24843) (Fission yeast).